The following is a 149-amino-acid chain: uncharacterized protein (149 aa).

The next 2 helical transmembrane spans lie at 91–111 and 122–142; these read IFIL…LFHY and ISIL…ICLL.

Its subcellular location is the membrane. This is an uncharacterized protein from Dictyostelium discoideum (Social amoeba).